Reading from the N-terminus, the 422-residue chain is UDP-N-acetylglucosamine 1-carboxyvinyltransferase (422 aa).

22-23 provides a ligand contact to phosphoenolpyruvate; sequence KN. Residue Arg92 coordinates UDP-N-acetyl-alpha-D-glucosamine. The active-site Proton donor is Cys116. At Cys116 the chain carries 2-(S-cysteinyl)pyruvic acid O-phosphothioketal. 2 residues coordinate UDP-N-acetyl-alpha-D-glucosamine: Asp306 and Ile328.

Belongs to the EPSP synthase family. MurA subfamily.

The protein resides in the cytoplasm. The catalysed reaction is phosphoenolpyruvate + UDP-N-acetyl-alpha-D-glucosamine = UDP-N-acetyl-3-O-(1-carboxyvinyl)-alpha-D-glucosamine + phosphate. Its pathway is cell wall biogenesis; peptidoglycan biosynthesis. Its function is as follows. Cell wall formation. Adds enolpyruvyl to UDP-N-acetylglucosamine. The chain is UDP-N-acetylglucosamine 1-carboxyvinyltransferase from Elusimicrobium minutum (strain Pei191).